Reading from the N-terminus, the 258-residue chain is Acyl-[acyl-carrier-protein]--UDP-N-acetylglucosamine O-acyltransferase (258 aa).

The protein belongs to the transferase hexapeptide repeat family. LpxA subfamily. Homotrimer.

The protein resides in the cytoplasm. The catalysed reaction is a (3R)-hydroxyacyl-[ACP] + UDP-N-acetyl-alpha-D-glucosamine = a UDP-3-O-[(3R)-3-hydroxyacyl]-N-acetyl-alpha-D-glucosamine + holo-[ACP]. Its pathway is glycolipid biosynthesis; lipid IV(A) biosynthesis; lipid IV(A) from (3R)-3-hydroxytetradecanoyl-[acyl-carrier-protein] and UDP-N-acetyl-alpha-D-glucosamine: step 1/6. Functionally, involved in the biosynthesis of lipid A, a phosphorylated glycolipid that anchors the lipopolysaccharide to the outer membrane of the cell. The sequence is that of Acyl-[acyl-carrier-protein]--UDP-N-acetylglucosamine O-acyltransferase from Pseudomonas aeruginosa (strain LESB58).